Reading from the N-terminus, the 215-residue chain is LexA repressor (215 aa).

The segment at residues 28-48 is a DNA-binding region (H-T-H motif); the sequence is RAEIAAELGFSSPNAAEEHLR. Catalysis depends on for autocatalytic cleavage activity residues Ser-133 and Lys-170.

The protein belongs to the peptidase S24 family. Homodimer.

It catalyses the reaction Hydrolysis of Ala-|-Gly bond in repressor LexA.. Functionally, represses a number of genes involved in the response to DNA damage (SOS response), including recA and lexA. In the presence of single-stranded DNA, RecA interacts with LexA causing an autocatalytic cleavage which disrupts the DNA-binding part of LexA, leading to derepression of the SOS regulon and eventually DNA repair. The sequence is that of LexA repressor from Burkholderia cenocepacia (strain HI2424).